The sequence spans 228 residues: Protein GlxC (228 aa).

It belongs to the FwdC/FmdC family.

This Rhizobium meliloti (strain 1021) (Ensifer meliloti) protein is Protein GlxC (glxC).